An 823-amino-acid polypeptide reads, in one-letter code: Protein ROOT HAIR DEFECTIVE 3 homolog 2 (823 aa).

The Cytoplasmic segment spans residues 1–688 (MEVPISGGGG…EAHRRSNNWL (688 aa)). Residues 45 to 260 (GLSYAVVSIV…IAPGGLAADR (216 aa)) enclose the GB1/RHD3-type G domain. 55-62 (GPQGSGKS) contributes to the GTP binding site. Positions 226–246 (LSSYEEKENLFKEQVGQLRQR) form a coiled coil. The chain crosses the membrane as a helical span at residues 689 to 709 (PPAWTVLLLAILGYNEFIFLL). At 710–712 (RNP) the chain is on the lumenal side. A helical membrane pass occupies residues 713-733 (LYLLGLFVAFVVSYAAWLQYD). At 734–823 (ITAYFRHGTL…SVGSNSDDES (90 aa)) the chain is on the cytoplasmic side. Residues 770–823 (NQKSSSHPPRHRPPLHPQSFRNQAQQQSQAQVQYQAPSSLSSSSSVGSNSDDES) are disordered. A compositionally biased stretch (low complexity) spans 786–823 (PQSFRNQAQQQSQAQVQYQAPSSLSSSSSVGSNSDDES).

It belongs to the TRAFAC class dynamin-like GTPase superfamily. GB1/RHD3 GTPase family. RHD3 subfamily.

It localises to the endoplasmic reticulum membrane. Probable GTP-binding protein that may be involved in cell development. The chain is Protein ROOT HAIR DEFECTIVE 3 homolog 2 from Oryza sativa subsp. japonica (Rice).